We begin with the raw amino-acid sequence, 277 residues long: ATP synthase subunit delta (277 aa).

The protein belongs to the ATPase delta chain family. F-type ATPases have 2 components, F(1) - the catalytic core - and F(0) - the membrane proton channel. F(1) has five subunits: alpha(3), beta(3), gamma(1), delta(1), epsilon(1). F(0) has three main subunits: a(1), b(2) and c(10-14). The alpha and beta chains form an alternating ring which encloses part of the gamma chain. F(1) is attached to F(0) by a central stalk formed by the gamma and epsilon chains, while a peripheral stalk is formed by the delta and b chains.

It is found in the cell membrane. In terms of biological role, f(1)F(0) ATP synthase produces ATP from ADP in the presence of a proton or sodium gradient. F-type ATPases consist of two structural domains, F(1) containing the extramembraneous catalytic core and F(0) containing the membrane proton channel, linked together by a central stalk and a peripheral stalk. During catalysis, ATP synthesis in the catalytic domain of F(1) is coupled via a rotary mechanism of the central stalk subunits to proton translocation. This protein is part of the stalk that links CF(0) to CF(1). It either transmits conformational changes from CF(0) to CF(1) or is implicated in proton conduction. The sequence is that of ATP synthase subunit delta from Bifidobacterium animalis subsp. lactis (strain AD011).